Consider the following 169-residue polypeptide: Alpha-S2-casein-like B (169 aa).

The N-terminal stretch at 1-15 is a signal peptide; that stretch reads MKFIILTCLLAVALA.

Belongs to the alpha-casein family. As to expression, mammary gland specific. Secreted in milk.

It is found in the secreted. Important role in the capacity of milk to transport calcium phosphate. The chain is Alpha-S2-casein-like B (Csn1s2b) from Rattus norvegicus (Rat).